The chain runs to 1242 residues: Structural polyprotein (1242 aa).

Residues 1–36 (MFPYPTLNYPPMAPVNPMAYRDPNPPRRRWRPFRPP) are necessary for nucleocapsid assembly and virus assembly. The interval 1–104 (MFPYPTLNYP…KQKPGKRQRM (104 aa)) is disordered. A host transcription inhibition region spans residues 37 to 70 (LAAQIEDLRRSIANLTFKQRAPNPPAGPPAKRKK). The Supraphysiological nuclear export signal motif lies at 44–51 (LRRSIANL). Basic residues predominate over residues 66 to 104 (AKRKKPAPKPKPAAPKKKRQPPPAKKQKRKQKPGKRQRM). Residues 67–70 (KRKK) carry the Nuclear localization signal motif. The segment at 83 to 113 (KRQPPPAKKQKRKQKPGKRQRMCMKLESDKT) is binding to the viral RNA. The segment at 98-112 (PGKRQRMCMKLESDK) is ribosome-binding. The residue at position 110 (S110) is a Phosphoserine. The region spanning 112-261 (KTFPIMLNGQ…KDTPEGSEPW (150 aa)) is the Peptidase S3 domain. The residue at position 113 (T113) is a Phosphothreonine. Residues H138, D160, and S212 each act as charge relay system in the active site. A functions as an uncleaved signal peptide for the precursor of protein E3/E2 region spans residues 262 to 273 (SLTTVMCVLANI). N272 is a glycosylation site (N-linked (GlcNAc...) asparagine; by host). Residues 325–688 (DLETHFTQYK…YYYNRYPMTT (364 aa)) lie on the Extracellular side of the membrane. A helical transmembrane segment spans residues 689–709 (VIGLCTCVAIIMVSCVTSVWL). Topologically, residues 710–744 (LCRTRNLCITPYRLAPNAQVPILLAVLCCVKPTRA) are cytoplasmic. Residues C717, C737, and C738 are each lipidated (S-palmitoyl cysteine; by host). Residues 717 to 737 (CITPYRLAPNAQVPILLAVLC) are transient transmembrane before p62-6K protein processing. The Extracellular portion of the chain corresponds to 745–759 (DDTLQVLNYLWNNNQ). The next 2 membrane-spanning stretches (helical) occupy residues 760–780 (NFFW…MRML) and 781–801 (RCLL…GAAA). Topologically, residues 802–1218 (YEHAAVMPNK…WSWLKVLVGS (417 aa)) are extracellular. Intrachain disulfides connect C850-C915, C863-C895, C864-C897, C869-C879, C1061-C1073, C1103-C1178, C1108-C1182, and C1130-C1172. An E1 fusion peptide loop region spans residues 885–902 (VYPFMWGGAYCFCDTENT). A helical transmembrane segment spans residues 1219-1239 (TSAFIVLGLIATAVVALVLFT). Over 1240–1242 (HRH) the chain is Cytoplasmic.

Part of a tetrameric complex composed of host CRM1, host importin alpha/beta dimer and the viral capsid; this complex blocks the receptor-mediated transport through the nuclear pore. Interacts with host phosphatase PPP1CA; this interaction dephosphorylates the capsid protein, which increases its ability to bind to the viral genome. Interacts with host karyopherin KPNA4; this interaction allows the nuclear import of the viral capsid protein. Interacts with spike glycoprotein E2. Interacts with host IRAK1; the interaction leads to inhibition of IRAK1-dependent signaling. As to quaternary structure, the precursor of protein E3/E2 and E1 form a heterodimer shortly after synthesis. In terms of assembly, the precursor of protein E3/E2 and E1 form a heterodimer shortly after synthesis. Processing of the precursor of protein E3/E2 into E2 and E3 results in a heterodimer of the spike glycoproteins E2 and E1. Spike at virion surface are constituted of three E2-E1 heterodimers. After target cell attachment and endocytosis, E1 change conformation to form homotrimers. Interacts with 6K protein. Processing of the precursor of protein E3/E2 into E2 and E3 results in a heterodimer of the spike glycoproteins E2 and E1. Spike at virion surface are constituted of three E2-E1 heterodimers. Interacts with 6K protein. As to quaternary structure, interacts with spike glycoprotein E1. Interacts with spike glycoprotein E2. Structural polyprotein: Specific enzymatic cleavages in vivo yield mature proteins. Capsid protein is auto-cleaved during polyprotein translation, unmasking a signal peptide at the N-terminus of the precursor of E3/E2. The remaining polyprotein is then targeted to the host endoplasmic reticulum, where host signal peptidase cleaves it into pE2, 6K and E1 proteins. pE2 is further processed to mature E3 and E2 by host furin in trans-Golgi vesicle. In terms of processing, phosphorylated on serine and threonine residues. Post-translationally, palmitoylated via thioester bonds. These palmitoylations may induce disruption of the C-terminus transmembrane. This would result in the reorientation of E2 C-terminus from lumenal to cytoplasmic side. N-glycosylated. In terms of processing, palmitoylated via thioester bonds.

It is found in the virion. Its subcellular location is the host cytoplasm. The protein resides in the host cell membrane. It localises to the host nucleus. The protein localises to the virion membrane. The catalysed reaction is Autocatalytic release of the core protein from the N-terminus of the togavirus structural polyprotein by hydrolysis of a -Trp-|-Ser- bond.. Its function is as follows. Forms an icosahedral capsid with a T=4 symmetry composed of 240 copies of the capsid protein surrounded by a lipid membrane through which penetrate 80 spikes composed of trimers of E1-E2 heterodimers. The capsid protein binds to the viral RNA genome at a site adjacent to a ribosome binding site for viral genome translation following genome release. Possesses a protease activity that results in its autocatalytic cleavage from the nascent structural protein. Following its self-cleavage, the capsid protein transiently associates with ribosomes, and within several minutes the protein binds to viral RNA and rapidly assembles into icosahedric core particles. The resulting nucleocapsid eventually associates with the cytoplasmic domain of the spike glycoprotein E2 at the cell membrane, leading to budding and formation of mature virions. In case of infection, new virions attach to target cells and after clathrin-mediated endocytosis their membrane fuses with the host endosomal membrane. This leads to the release of the nucleocapsid into the cytoplasm, followed by an uncoating event necessary for the genomic RNA to become accessible. The uncoating might be triggered by the interaction of capsid proteins with ribosomes. Binding of ribosomes would release the genomic RNA since the same region is genomic RNA-binding and ribosome-binding. Specifically inhibits interleukin-1 receptor-associated kinase 1/IRAK1-dependent signaling during viral entry, representing a means by which the alphaviruses may evade innate immune detection and activation prior to viral gene expression. Inhibits host transcription. Forms a tetrameric complex with XPO1/CRM1 and the nuclear import receptor importin. This complex blocks the central channel of host nuclear pores thereby inhibiting the receptor-mediated nuclear transport and thus the host mRNA and rRNA transcription. The inhibition of transcription is linked to a cytopathic effect on the host cell. In terms of biological role, provides the signal sequence for the translocation of the precursor of protein E3/E2 to the host endoplasmic reticulum. Furin-cleaved E3 remains associated with spike glycoprotein E1 and mediates pH protection of the latter during the transport via the secretory pathway. After virion release from the host cell, the assembly protein E3 is gradually released in the extracellular space. Functionally, plays a role in viral attachment to target host cell, by binding to the cell receptor. Synthesized as a p62 precursor which is processed by furin at the cell membrane just before virion budding, giving rise to E2-E1 heterodimer. The p62-E1 heterodimer is stable, whereas E2-E1 is unstable and dissociate at low pH. p62 is processed at the last step, presumably to avoid E1 fusion activation before its final export to cell surface. E2 C-terminus contains a transitory transmembrane that would be disrupted by palmitoylation, resulting in reorientation of the C-terminal tail from lumenal to cytoplasmic side. This step is critical since E2 C-terminus is involved in budding by interacting with capsid proteins. This release of E2 C-terminus in cytoplasm occurs lately in protein export, and precludes premature assembly of particles at the endoplasmic reticulum membrane. Constitutive membrane protein involved in virus glycoprotein processing, cell permeabilization, and the budding of viral particles. Disrupts the calcium homeostasis of the cell, probably at the endoplasmic reticulum level. This leads to cytoplasmic calcium elevation. Because of its lipophilic properties, the 6K protein is postulated to influence the selection of lipids that interact with the transmembrane domains of the glycoproteins, which, in turn, affects the deformability of the bilayer required for the extreme curvature that occurs as budding proceeds. Present in low amount in virions, about 3% compared to viral glycoproteins. Its function is as follows. Class II viral fusion protein. Fusion activity is inactive as long as E1 is bound to E2 in mature virion. After virus attachment to target cell and endocytosis, acidification of the endosome would induce dissociation of E1/E2 heterodimer and concomitant trimerization of the E1 subunits. This E1 trimer is fusion active, and promotes release of viral nucleocapsid in cytoplasm after endosome and viral membrane fusion. Efficient fusion requires the presence of cholesterol and sphingolipid in the target membrane. Fusion is optimal at levels of about 1 molecule of cholesterol per 2 molecules of phospholipids, and is specific for sterols containing a 3-beta-hydroxyl group. This is Structural polyprotein from Aedes (Human).